Here is a 989-residue protein sequence, read N- to C-terminus: Zinc finger SWIM domain-containing protein 4 (989 aa).

Positions methionine 1–proline 32 are disordered. The segment at tyrosine 139–isoleucine 176 adopts an SWIM-type zinc-finger fold.

The sequence is that of Zinc finger SWIM domain-containing protein 4 (ZSWIM4) from Homo sapiens (Human).